A 243-amino-acid polypeptide reads, in one-letter code: Ubiquinone/menaquinone biosynthesis C-methyltransferase UbiE (243 aa).

S-adenosyl-L-methionine is bound by residues Thr69, Asp90, and 116-117 (DA).

This sequence belongs to the class I-like SAM-binding methyltransferase superfamily. MenG/UbiE family.

It carries out the reaction a 2-demethylmenaquinol + S-adenosyl-L-methionine = a menaquinol + S-adenosyl-L-homocysteine + H(+). The catalysed reaction is a 2-methoxy-6-(all-trans-polyprenyl)benzene-1,4-diol + S-adenosyl-L-methionine = a 5-methoxy-2-methyl-3-(all-trans-polyprenyl)benzene-1,4-diol + S-adenosyl-L-homocysteine + H(+). The protein operates within quinol/quinone metabolism; menaquinone biosynthesis; menaquinol from 1,4-dihydroxy-2-naphthoate: step 2/2. It functions in the pathway cofactor biosynthesis; ubiquinone biosynthesis. In terms of biological role, methyltransferase required for the conversion of demethylmenaquinol (DMKH2) to menaquinol (MKH2) and the conversion of 2-polyprenyl-6-methoxy-1,4-benzoquinol (DDMQH2) to 2-polyprenyl-3-methyl-6-methoxy-1,4-benzoquinol (DMQH2). This Paraburkholderia phymatum (strain DSM 17167 / CIP 108236 / LMG 21445 / STM815) (Burkholderia phymatum) protein is Ubiquinone/menaquinone biosynthesis C-methyltransferase UbiE.